We begin with the raw amino-acid sequence, 229 residues long: GSKNASNPKDGAASKGGKDGKTTADRKVAWERIRCAIPRDKDAESKSRRIELFKQFDTNGTGKLGFREVLDGCYGILKLDEFTTHLPDIVQRAFDKAKDLGNKVKGVGEEDLVEFLEFRLMLCYIYDIFELTVMFDTMDKDGSLLLELQEFKEALPKLKEWGVDITDATTVFNEIDTNGSGVVTFDEFSCWAVTKKLQVCGDPDDEENGANEGDGANAGDGVPAAEGSA.

The segment at 1–25 (GSKNASNPKDGAASKGGKDGKTTAD) is disordered. Basic and acidic residues predominate over residues 16–25 (GGKDGKTTAD). EF-hand domains follow at residues 44–79 (ESKS…ILKL), 80–115 (DEFT…LVEF), 126–161 (YDIF…LKEW), and 163–198 (VDIT…KKLQ). Positions 57, 59, 61, 63, and 68 each coordinate Ca(2+). Ca(2+) is bound by residues Asp-139, Asp-141, Ser-143, Glu-150, Asp-176, Asn-178, Ser-180, and Glu-187. A disordered region spans residues 202 to 229 (DPDDEENGANEGDGANAGDGVPAAEGSA). Low complexity predominate over residues 210–221 (ANEGDGANAGDG).

The protein belongs to the calflagin family.

The protein resides in the cell projection. Its subcellular location is the cilium. It localises to the flagellum. Its function is as follows. May contribute to the rapid motility of the trypanosomes, playing a role either in flagellar structure or in calcium metabolism. Could alternate between a GDP-bound inactive form to a calcium/GTP-bound active form. This Trypanosoma brucei brucei protein is Flagellar calcium-binding protein TB-1.7G.